Reading from the N-terminus, the 290-residue chain is UPF0761 membrane protein YihY (290 aa).

Helical transmembrane passes span 44-64 (LLSLVPLVAVVFALFAAFPMF), 104-124 (VGACGLIVTALLLMYSIDSAL), 140-160 (FAVYWMILTLGPLLAGASLAI), 183-203 (IFPLLLSWISFWLLYSIVPTI), 210-230 (AIVGAFVAALLFEAGKKGFAL), and 244-264 (VLAVIPILFVWVYWTWCIVLL).

The protein belongs to the UPF0761 family.

It is found in the cell inner membrane. This Escherichia coli O127:H6 (strain E2348/69 / EPEC) protein is UPF0761 membrane protein YihY.